The sequence spans 450 residues: Exodeoxyribonuclease 7 large subunit (450 aa).

It belongs to the XseA family. In terms of assembly, heterooligomer composed of large and small subunits.

It is found in the cytoplasm. It carries out the reaction Exonucleolytic cleavage in either 5'- to 3'- or 3'- to 5'-direction to yield nucleoside 5'-phosphates.. Bidirectionally degrades single-stranded DNA into large acid-insoluble oligonucleotides, which are then degraded further into small acid-soluble oligonucleotides. This Rickettsia felis (strain ATCC VR-1525 / URRWXCal2) (Rickettsia azadi) protein is Exodeoxyribonuclease 7 large subunit.